An 88-amino-acid polypeptide reads, in one-letter code: Small ribosomal subunit protein uS17 (88 aa).

The protein belongs to the universal ribosomal protein uS17 family. Part of the 30S ribosomal subunit.

Its function is as follows. One of the primary rRNA binding proteins, it binds specifically to the 5'-end of 16S ribosomal RNA. This chain is Small ribosomal subunit protein uS17, found in Prochlorococcus marinus (strain NATL1A).